The chain runs to 205 residues: Small ribosomal subunit protein uS4 (205 aa).

A disordered region spans residues Met1–Ser46. Positions Ser94–Leu154 constitute an S4 RNA-binding domain.

Belongs to the universal ribosomal protein uS4 family. In terms of assembly, part of the 30S ribosomal subunit. Contacts protein S5. The interaction surface between S4 and S5 is involved in control of translational fidelity.

In terms of biological role, one of the primary rRNA binding proteins, it binds directly to 16S rRNA where it nucleates assembly of the body of the 30S subunit. With S5 and S12 plays an important role in translational accuracy. In Caulobacter sp. (strain K31), this protein is Small ribosomal subunit protein uS4.